The following is a 313-amino-acid chain: Extracellular metalloprotease (313 aa).

The first 34 residues, 1–34 (MKLVPRFRKQWFAYLTVLCLALAAAVSFGVPAKA), serve as a signal peptide directing secretion. The tract at residues 35–74 (AENPQTSVSNTGKEADATKNQTSKADQVSAPYEGTGKTSK) is disordered. A propeptide spanning residues 35 to 93 (AENPQTSVSNTGKEADATKNQTSKADQVSAPYEGTGKTSKSLYGGQTELEKNIQTLQPS) is cleaved from the precursor. Residues 37-60 (NPQTSVSNTGKEADATKNQTSKAD) are compositionally biased toward polar residues. Cysteine 131 and cysteine 147 are oxidised to a cystine. Residues histidine 146 and serine 267 each act as charge relay system in the active site.

This sequence belongs to the peptidase S1B family. Monomer.

The protein resides in the secreted. The chain is Extracellular metalloprotease (mpr) from Bacillus subtilis (strain 168).